Here is a 319-residue protein sequence, read N- to C-terminus: UPF0761 membrane protein PBPRA3489 (319 aa).

A run of 6 helical transmembrane segments spans residues 50–70, 107–127, 143–163, 188–208, 215–235, and 249–269; these read LVPM…FAGL, VGIG…DHAL, FSIY…SIAV, ALPV…VPNL, ALLG…GFAL, and ALAV…IVLL.

The protein belongs to the UPF0761 family.

It is found in the cell inner membrane. This is UPF0761 membrane protein PBPRA3489 from Photobacterium profundum (strain SS9).